A 229-amino-acid polypeptide reads, in one-letter code: Small ribosomal subunit protein uS3 (229 aa).

The KH type-2 domain occupies 17-85; that stretch reads VKEWIKDEVR…NPQVSVDEVE (69 aa). Positions 202 to 229 are disordered; sequence LRGESGEDEGDKGDEQGGEAQEAEGAGA. Residues 219–229 show a composition bias toward low complexity; it reads GEAQEAEGAGA.

The protein belongs to the universal ribosomal protein uS3 family. In terms of assembly, part of the 30S ribosomal subunit.

Functionally, binds the lower part of the 30S subunit head. The protein is Small ribosomal subunit protein uS3 of Archaeoglobus fulgidus (strain ATCC 49558 / DSM 4304 / JCM 9628 / NBRC 100126 / VC-16).